The sequence spans 363 residues: Ribosomal RNA large subunit methyltransferase M (363 aa).

Residues Ser190, 223–226, Asp242, Asp262, and Asp279 each bind S-adenosyl-L-methionine; that span reads CPGG. Lys308 (proton acceptor) is an active-site residue.

The protein belongs to the class I-like SAM-binding methyltransferase superfamily. RNA methyltransferase RlmE family. RlmM subfamily. In terms of assembly, monomer.

It is found in the cytoplasm. It carries out the reaction cytidine(2498) in 23S rRNA + S-adenosyl-L-methionine = 2'-O-methylcytidine(2498) in 23S rRNA + S-adenosyl-L-homocysteine + H(+). In terms of biological role, catalyzes the 2'-O-methylation at nucleotide C2498 in 23S rRNA. The protein is Ribosomal RNA large subunit methyltransferase M of Vibrio vulnificus (strain CMCP6).